The chain runs to 477 residues: MFRLNTLSALAELAVGSRWYHGASQPTQTKRRLMLVAFLGASAVTASTGLLWKKAHAESPPCVNSKKPDTEDKERNKDSGEVSSREGRAADAAAEPYPEDKKKKRSGFRDRKVMEYENRIRAYSTPDKIFRYFATLKVINEPGETEVFMTPQDFVRSITPNEKQPEHLGLDQYIIKRFDGKKIAQEREKFADEGSIFYSLGECGLISFSDYIFLTTVLSTPQRNFEIAFKMFDLNGDGEVDMEEFEQVQSIIRSQTSMGMRHRDRPTTGNTLKSGLCSALTTYFFGADLKGKLTIKNFLEFQRKLQHDVLKLEFERHDPVDGRISERQFGGMLLAYSGVQSKKLTAMQRQLKKHFKDGKGLTFQEVENFFTFLKNINDVDTALSFYHMAGASLDKVTMQQVARTVAKVELSDHVCDVVFALFDCDGNGELSNKEFVSIMKQRLMRGLEKPKDMGFTRLMQAMWKCAQETAWDFALPK.

Residues 1–33 (MFRLNTLSALAELAVGSRWYHGASQPTQTKRRL) constitute a mitochondrion transit peptide. The interval 57–107 (AESPPCVNSKKPDTEDKERNKDSGEVSSREGRAADAAAEPYPEDKKKKRSG) is disordered. Over residues 66–89 (KKPDTEDKERNKDSGEVSSREGRA) the composition is skewed to basic and acidic residues. The polybasic region stretch occupies residues 101 to 112 (KKKKRSGFRDRK). Residue serine 124 is modified to Phosphoserine; by PKB. The segment at 128–131 (KIFR) is k/R-ring. The 36-residue stretch at 220–255 (TPQRNFEIAFKMFDLNGDGEVDMEEFEQVQSIIRSQ) folds into the EF-hand 1 domain. Ca(2+) is bound by residues aspartate 233, asparagine 235, aspartate 237, glutamate 239, and glutamate 244. The k/R-ring stretch occupies residues 261–265 (RHRDR). Residues 356-376 (KDGKGLTFQEVENFFTFLKNI) form the EF-hand 2; degenerate domain. Positions 410–445 (LSDHVCDVVFALFDCDGNGELSNKEFVSIMKQRLMR) constitute an EF-hand 3 domain. Residues aspartate 423, aspartate 425, asparagine 427, glutamate 429, and glutamate 434 each contribute to the Ca(2+) site. Position 457 is an asymmetric dimethylarginine (arginine 457). Positions 457–467 (RLMQAMWKCAQ) are C-helix region.

Belongs to the MICU1 family. MICU1 subfamily. In terms of assembly, heterodimer; disulfide-linked; heterodimerizes with MICU2 or MICU3. Homodimer; disulfide-linked. Component of the uniplex complex, composed of MCU, EMRE/SMDT1, MICU1 and MICU2 (or MICU3) in a 4:4:1:1 stoichiometry. The composition of calcium sensors within the uniplex complex can differ depending on tissues: a MICU1 homodimer can be present instead of the MICU1-MICU2 heterodimer in skeletal-muscle and kidney. MICU1 is recruited to the uniplex complex by EMRE/SMDT1, and it associates with MCU at low calcium levels, occluding the pore of the MCU channel. Associates with the MICOS complex. Interacts with SLC25A23. Interacts with CHCHD4/MIA40; which introduces the interchain disulfide bond with MICU2. Interacts (when methylated) with UCP2; leading to decrease the calcium sensitivity of MICU1. As to quaternary structure, heterodimer; disulfide-linked; heterodimerizes with MICU2 or MICU3. Heterodimerizes with MICU3 in skeletal muscle. Component of the uniplex complex, composed of MCU, EMRE/SMDT1, MICU1 and MICU2 (or MICU3) in a 4:4:1:1 stoichiometry. Also localizes to mitochondrial cristae junctions. Phosphorylation at Ser-124 by AKT1 impairs its maturation and stability. In terms of processing, asymmetric dimethylation at Arg-457 by PRMT1 decreases the calcium sensitivity of MICU1 by promoting interaction with UCP2. Post-translationally, degraded by YME1L1 when not complexed as homodimer or heterodimer. Not degraded when complexed as homodimer or heterodimer; the presence of the interchain disulfide bond protecting MICU1 from degradation by YME1L1. Expressed in skeletal muscle, heart, kidney, liver, brain, lung, fat and spleen. In terms of tissue distribution, specifically expressed in the skeletal muscle.

Its subcellular location is the mitochondrion intermembrane space. It is found in the mitochondrion inner membrane. Its function is as follows. Calcium sensor of the mitochondrial calcium uniporter (MCU) channel, which senses calcium level via its EF-hand domains. MICU1 and MICU2 (or MICU3) form a disulfide-linked heterodimer that stimulates and inhibits MCU activity, depending on the concentration of calcium. At low calcium levels, MICU1 occludes the pore of the MCU channel, preventing mitochondrial calcium uptake. At higher calcium levels, calcium-binding to MICU1 and MICU2 (or MICU3) induces a conformational change that weakens MCU-MICU1 interactions and moves the MICU1-MICU2 heterodimer away from the pore, allowing calcium permeation through the MCU channel. Also required to protect against manganese toxicity by preventing manganese uptake by MCU: mechanistically, manganese-binding to its EF-hand domains does not induce any conformational change, maintaining MCU pore occlusion. Acts as a regulator of mitochondrial cristae structure independently of its ability to regulate the mitochondrial calcium uniporter channel. Regulates glucose-dependent insulin secretion in pancreatic beta-cells by regulating mitochondrial calcium uptake. Induces T-helper 1-mediated autoreactivity, which is accompanied by the release of IFNG. Isoform that regulates mitochondrial calcium uniporter (MCU) in the skeletal muscle. Compared to other isoforms, this isoform has higher affinity for calcium, promoting mitochondrial calcium uptake at lower calcium concentrations. This allows a rapid response of mitochondrial metabolism and ensures sustained ATP production needed for resistance and strenuous exercise. The polypeptide is Calcium uptake protein 1, mitochondrial (Mus musculus (Mouse)).